The following is a 435-amino-acid chain: Probable exopolygalacturonase B (435 aa).

Residues 1 to 15 (MKFFTAALFASAVSA) form the signal peptide. 3 N-linked (GlcNAc...) asparagine glycosylation sites follow: Asn59, Asn184, and Asn224. Asp254 (proton donor) is an active-site residue. The cysteines at positions 256 and 273 are disulfide-linked. N-linked (GlcNAc...) asparagine glycosylation is found at Asn262 and Asn274. The active site involves His277. N-linked (GlcNAc...) asparagine glycosylation is found at Asn301, Asn328, Asn365, and Asn368. An intrachain disulfide couples Cys391 to Cys397.

This sequence belongs to the glycosyl hydrolase 28 family.

It localises to the secreted. The enzyme catalyses [(1-&gt;4)-alpha-D-galacturonosyl](n) + H2O = alpha-D-galacturonate + [(1-&gt;4)-alpha-D-galacturonosyl](n-1). Specific in hydrolyzing the terminal glycosidic bond of polygalacturonic acid and oligogalacturonates. The chain is Probable exopolygalacturonase B (pgxB) from Aspergillus terreus (strain NIH 2624 / FGSC A1156).